The primary structure comprises 241 residues: ATP synthase subunit a (241 aa).

The next 7 helical transmembrane spans lie at 29–49 (NSSLFMMISVVSVILFLLLGV), 86–106 (IPLVFTVFTFTLSCNLVGMLP), 114–134 (HVIVTFALSMIVFTYTTIVGF), 144–164 (ILLPEGIPSWLAPMMVFIKLF), 177–197 (LAANMIAGHTIIKVVAGFIMN), 200–220 (LILTPIPFLFIIALIGFEVFV), and 221–241 (AILQAYIFTILTCIYLSDAVK).

This sequence belongs to the ATPase A chain family. As to quaternary structure, F-type ATPases have 2 components, CF(1) - the catalytic core - and CF(0) - the membrane proton channel. CF(1) has five subunits: alpha(3), beta(3), gamma(1), delta(1), epsilon(1). CF(0) has three main subunits: a(1), b(2) and c(9-12). The alpha and beta chains form an alternating ring which encloses part of the gamma chain. CF(1) is attached to CF(0) by a central stalk formed by the gamma and epsilon chains, while a peripheral stalk is formed by the delta and b chains.

It is found in the cell membrane. In terms of biological role, key component of the proton channel; it plays a direct role in the translocation of protons across the membrane. This is ATP synthase subunit a from Wolbachia sp. subsp. Brugia malayi (strain TRS).